The chain runs to 434 residues: Glutamyl-tRNA reductase (434 aa).

Substrate-binding positions include 49–52 (TCNR), S114, 119–121 (EPQ), and Q125. C50 functions as the Nucleophile in the catalytic mechanism. Residue 199–204 (GAGETI) coordinates NADP(+).

It belongs to the glutamyl-tRNA reductase family. As to quaternary structure, homodimer.

It carries out the reaction (S)-4-amino-5-oxopentanoate + tRNA(Glu) + NADP(+) = L-glutamyl-tRNA(Glu) + NADPH + H(+). It participates in porphyrin-containing compound metabolism; protoporphyrin-IX biosynthesis; 5-aminolevulinate from L-glutamyl-tRNA(Glu): step 1/2. Functionally, catalyzes the NADPH-dependent reduction of glutamyl-tRNA(Glu) to glutamate 1-semialdehyde (GSA). This chain is Glutamyl-tRNA reductase, found in Pasteurella multocida (strain Pm70).